The primary structure comprises 67 residues: LPS-assembly lipoprotein LptM (67 aa).

The first 19 residues, 1 to 19 (MKNVFKTLAVLLTLFSLTG), serve as a signal peptide directing secretion. A lipid anchor (N-palmitoyl cysteine) is attached at Cys20. Cys20 is lipidated: S-diacylglycerol cysteine. The tract at residues 26–67 (LYFPPADKNAPPPTKKVDSQTQSTMPDKNDRATGDGPSQVNY) is disordered.

Belongs to the LptM family. As to quaternary structure, interacts with the outer membrane embedded portion of the LPS translocon formed by LptD and LptE (LptDE).

The protein localises to the cell outer membrane. In terms of biological role, component of the lipopolysaccharide (LPS) transport (Lpt) pathway that promotes efficient assembly of the outer membrane LPS translocon (LptDE) by the BAM complex. Facilitates oxidative maturation of LptD by stabilizing a conformation of the LPS translocon in which LptD can efficiently acquire native disulfide bonds, thereby activating the LPS translocon. The protein is LPS-assembly lipoprotein LptM of Salmonella typhi.